The sequence spans 412 residues: Probable tRNA sulfurtransferase (412 aa).

Positions 58 to 163 (DEVIKQLGYV…SEGTYIYVGK (106 aa)) constitute a THUMP domain. ATP is bound by residues 181–182 (ML), 206–207 (HF), arginine 265, glycine 287, and glutamine 296.

The protein belongs to the ThiI family.

The protein resides in the cytoplasm. It catalyses the reaction [ThiI sulfur-carrier protein]-S-sulfanyl-L-cysteine + a uridine in tRNA + 2 reduced [2Fe-2S]-[ferredoxin] + ATP + H(+) = [ThiI sulfur-carrier protein]-L-cysteine + a 4-thiouridine in tRNA + 2 oxidized [2Fe-2S]-[ferredoxin] + AMP + diphosphate. It carries out the reaction [ThiS sulfur-carrier protein]-C-terminal Gly-Gly-AMP + S-sulfanyl-L-cysteinyl-[cysteine desulfurase] + AH2 = [ThiS sulfur-carrier protein]-C-terminal-Gly-aminoethanethioate + L-cysteinyl-[cysteine desulfurase] + A + AMP + 2 H(+). The protein operates within cofactor biosynthesis; thiamine diphosphate biosynthesis. Its function is as follows. Catalyzes the ATP-dependent transfer of a sulfur to tRNA to produce 4-thiouridine in position 8 of tRNAs, which functions as a near-UV photosensor. Also catalyzes the transfer of sulfur to the sulfur carrier protein ThiS, forming ThiS-thiocarboxylate. This is a step in the synthesis of thiazole, in the thiamine biosynthesis pathway. The sulfur is donated as persulfide by IscS. This chain is Probable tRNA sulfurtransferase, found in Acholeplasma laidlawii (strain PG-8A).